We begin with the raw amino-acid sequence, 162 residues long: Regulatory protein RecX (162 aa).

It belongs to the RecX family.

Its subcellular location is the cytoplasm. Its function is as follows. Modulates RecA activity. The sequence is that of Regulatory protein RecX from Xanthomonas oryzae pv. oryzae (strain PXO99A).